A 534-amino-acid polypeptide reads, in one-letter code: NAD(P)H-quinone oxidoreductase chain 4 (534 aa).

The next 14 helical transmembrane spans lie at 12–32 (FPWL…IPFF), 44–64 (FALS…INGF), 96–116 (MPLI…AWPV), 120–140 (PKLF…VFAV), 144–164 (LLFF…LAIW), 176–196 (FIIY…AMGF), 220–240 (ILCY…VPLH), 251–271 (TAPV…YALL), 285–305 (FAPL…LTSF), 314–334 (IAYS…SFSS), 340–360 (AMLQ…LVGA), 384–404 (FALW…SGFV), 425–445 (VVMA…LLSM), and 472–492 (VYII…PRLV).

This sequence belongs to the complex I subunit 4 family.

The protein localises to the cellular thylakoid membrane. The enzyme catalyses a plastoquinone + NADH + (n+1) H(+)(in) = a plastoquinol + NAD(+) + n H(+)(out). It carries out the reaction a plastoquinone + NADPH + (n+1) H(+)(in) = a plastoquinol + NADP(+) + n H(+)(out). In terms of biological role, NDH-1 shuttles electrons from NAD(P)H, via FMN and iron-sulfur (Fe-S) centers, to quinones in the respiratory chain. The immediate electron acceptor for the enzyme in this species is believed to be plastoquinone. Couples the redox reaction to proton translocation (for every two electrons transferred, four hydrogen ions are translocated across the cytoplasmic membrane), and thus conserves the redox energy in a proton gradient. In Prochlorococcus marinus (strain AS9601), this protein is NAD(P)H-quinone oxidoreductase chain 4.